We begin with the raw amino-acid sequence, 309 residues long: Porphobilinogen deaminase (309 aa).

Cysteine 242 carries the post-translational modification S-(dipyrrolylmethanemethyl)cysteine.

This sequence belongs to the HMBS family. Monomer. The cofactor is dipyrromethane.

The enzyme catalyses 4 porphobilinogen + H2O = hydroxymethylbilane + 4 NH4(+). It participates in porphyrin-containing compound metabolism; protoporphyrin-IX biosynthesis; coproporphyrinogen-III from 5-aminolevulinate: step 2/4. Functionally, tetrapolymerization of the monopyrrole PBG into the hydroxymethylbilane pre-uroporphyrinogen in several discrete steps. This Shewanella frigidimarina (strain NCIMB 400) protein is Porphobilinogen deaminase.